Reading from the N-terminus, the 571-residue chain is Urease subunit alpha (571 aa).

A Urease domain is found at 133–571 (AGIDTHIHFI…VALNQRYFFS (439 aa)). Residues His-138, His-140, and Lys-221 each coordinate Ni(2+). An N6-carboxylysine modification is found at Lys-221. His-223 provides a ligand contact to substrate. Ni(2+) contacts are provided by His-250 and His-276. The active-site Proton donor is His-324. Asp-364 contributes to the Ni(2+) binding site.

It belongs to the metallo-dependent hydrolases superfamily. Urease alpha subunit family. Heterotrimer of UreA (gamma), UreB (beta) and UreC (alpha) subunits. Three heterotrimers associate to form the active enzyme. Ni cation is required as a cofactor. In terms of processing, carboxylation allows a single lysine to coordinate two nickel ions.

Its subcellular location is the cytoplasm. It carries out the reaction urea + 2 H2O + H(+) = hydrogencarbonate + 2 NH4(+). The protein operates within nitrogen metabolism; urea degradation; CO(2) and NH(3) from urea (urease route): step 1/1. The chain is Urease subunit alpha from Photorhabdus laumondii subsp. laumondii (strain DSM 15139 / CIP 105565 / TT01) (Photorhabdus luminescens subsp. laumondii).